The primary structure comprises 243 residues: 35 kDa gas vesicle protein (243 aa).

The protein belongs to the gas vesicle GvpC family.

It localises to the gas vesicle shell. Its function is as follows. May confer stability to the gas vesicle shells. Gas vesicles are small, hollow, gas filled protein structures that are found in several microbial planktonic microorganisms. They allow the positioning of the organism at the favorable depth for growth. This Dactylococcopsis salina (strain PCC 8305) (Myxobactron salinum) protein is 35 kDa gas vesicle protein.